The following is a 432-amino-acid chain: MLDIQQLRNDLDNVVARLSSRGFAFDINAFIALENERKTVQTRTQDLQAKRNATSKQIGIAKSRGEDVASIMAEVAGLGAQLKEGEERLAAIQAELQQLLLSVPNLPHESVPVGKSEEDNVEVRRVGTPRRFDFDVKDHTDIGTPLGLDFDTGAKLAGARFTLMRGQIARLHRALAQFMLDTQTEQHGYTECYTPYIVNADSLRGTGQLPKFEADLFAAQKGGQEGESNEAFYLIPTSEVTLTNTVRDEIVPLDSLPIKLTAHTPCFRSEAGSYGRDTRGMIRQHQFDKVEMVQITHPERSYDALEEMVGHAEHVLQALGLPYRVVLLCTGDMGFGAAKTYDLEVWLPAQNTYREISSVSNCEAFQARRLQARFRNENGKPELLHTLNGSGLAVGRTLVAVLENNQQADGSVVVPEVLRPYMGGLTVISAQQ.

237–239 lines the L-serine pocket; that stretch reads TSE. 268-270 is a binding site for ATP; that stretch reads RSE. E291 serves as a coordination point for L-serine. 355-358 lines the ATP pocket; the sequence is EISS. S390 provides a ligand contact to L-serine.

It belongs to the class-II aminoacyl-tRNA synthetase family. Type-1 seryl-tRNA synthetase subfamily. As to quaternary structure, homodimer. The tRNA molecule binds across the dimer.

Its subcellular location is the cytoplasm. It carries out the reaction tRNA(Ser) + L-serine + ATP = L-seryl-tRNA(Ser) + AMP + diphosphate + H(+). The enzyme catalyses tRNA(Sec) + L-serine + ATP = L-seryl-tRNA(Sec) + AMP + diphosphate + H(+). The protein operates within aminoacyl-tRNA biosynthesis; selenocysteinyl-tRNA(Sec) biosynthesis; L-seryl-tRNA(Sec) from L-serine and tRNA(Sec): step 1/1. Catalyzes the attachment of serine to tRNA(Ser). Is also able to aminoacylate tRNA(Sec) with serine, to form the misacylated tRNA L-seryl-tRNA(Sec), which will be further converted into selenocysteinyl-tRNA(Sec). The polypeptide is Serine--tRNA ligase (Methylobacillus flagellatus (strain ATCC 51484 / DSM 6875 / VKM B-1610 / KT)).